The primary structure comprises 402 residues: Eukaryotic initiation factor 4A (402 aa).

Residues 29-57 carry the Q motif motif; sequence ESFDDMELKEELLRGIYGFGFEKPSAIQK. The Helicase ATP-binding domain maps to 60–230; the sequence is IVPCTTGKDV…NRFMRNPIRI (171 aa). 73–80 provides a ligand contact to ATP; sequence AQSGTGKT. The DEAD box signature appears at 178-181; that stretch reads DEAD. Residues 241–402 enclose the Helicase C-terminal domain; sequence GIRQFYINVQ…EMPESIADLI (162 aa).

This sequence belongs to the DEAD box helicase family. eIF4A subfamily. As to quaternary structure, eIF4F is a multi-subunit complex, the composition of which varies with external and internal environmental conditions. It is composed of at least EIF4A, EIF4E and EIF4G.

It catalyses the reaction ATP + H2O = ADP + phosphate + H(+). Functionally, ATP-dependent RNA helicase which is a subunit of the eIF4F complex involved in cap recognition and is required for mRNA binding to ribosome. In the current model of translation initiation, eIF4A unwinds RNA secondary structures in the 5'-UTR of mRNAs which is necessary to allow efficient binding of the small ribosomal subunit, and subsequent scanning for the initiator codon. This Caenorhabditis elegans protein is Eukaryotic initiation factor 4A (inf-1).